We begin with the raw amino-acid sequence, 448 residues long: Ribosomal protein uS12 methylthiotransferase RimO (448 aa).

The 116-residue stretch at 13 to 128 (KSFFITTLGC…AGEILRKNFP (116 aa)) folds into the MTTase N-terminal domain. Positions 22, 58, 91, 167, 171, and 174 each coordinate [4Fe-4S] cluster. In terms of domain architecture, Radical SAM core spans 153–382 (NYSKPYSYVK…AYLGTLKTIH (230 aa)). Residues 383 to 448 (QNRIGKIYPC…ELDMSGTWVD (66 aa)) enclose the TRAM domain.

This sequence belongs to the methylthiotransferase family. RimO subfamily. [4Fe-4S] cluster serves as cofactor.

Its subcellular location is the cytoplasm. It carries out the reaction L-aspartate(89)-[ribosomal protein uS12]-hydrogen + (sulfur carrier)-SH + AH2 + 2 S-adenosyl-L-methionine = 3-methylsulfanyl-L-aspartate(89)-[ribosomal protein uS12]-hydrogen + (sulfur carrier)-H + 5'-deoxyadenosine + L-methionine + A + S-adenosyl-L-homocysteine + 2 H(+). In terms of biological role, catalyzes the methylthiolation of an aspartic acid residue of ribosomal protein uS12. In Leptospira biflexa serovar Patoc (strain Patoc 1 / Ames), this protein is Ribosomal protein uS12 methylthiotransferase RimO.